The following is a 456-amino-acid chain: 5-hydroxytryptamine receptor 3E (456 aa).

A signal peptide spans 1 to 25; sequence MEGSWFHRKRFSFYLLLGFLLQGRG. The Extracellular portion of the chain corresponds to 26-248; the sequence is VTFTINCSGF…FYVAIRRRPS (223 aa). A disulfide bridge connects residues C162 and C176. The N-linked (GlcNAc...) asparagine glycan is linked to N175. A helical membrane pass occupies residues 249 to 269; the sequence is LYVINLLVPSGFLVAIDALSF. Residues 270–282 lie on the Cytoplasmic side of the membrane; sequence YLPVKSGNRVPFK. A helical membrane pass occupies residues 283–303; that stretch reads ITLLLGYNVFLLMMSDLLPTS. The Extracellular portion of the chain corresponds to 304 to 307; sequence GTPL. The helical transmembrane segment at 308–328 threads the bilayer; that stretch reads IGVYFALCLSLMVGSLLETIF. The Cytoplasmic portion of the chain corresponds to 329–433; sequence ITHLLHVATT…WLQFSHAMDA (105 aa). The tract at residues 401-432 is HA-stretch; determines single-channel conductance in 5-HT3 receptors; sequence TGGSEWTRAQREHEAQKQHSVELWLQFSHAMD. Residues 434 to 454 traverse the membrane as a helical segment; that stretch reads MLFRLYLLFMASSIITVICLW. Over 455 to 456 the chain is Extracellular; it reads NT.

The protein belongs to the ligand-gated ion channel (TC 1.A.9) family. 5-hydroxytryptamine receptor (TC 1.A.9.2) subfamily. HTR3E sub-subfamily. In terms of assembly, forms homopentameric as well as heteropentameric serotonin-activated cation-selective channel complexes with HTR3A. The homomeric complex is not functional. Heteropentameric complexes display properties which resemble that of neuronal serotonin-activated channels in vivo. As to expression, expressed in adult colon and intestine.

It is found in the postsynaptic cell membrane. The protein resides in the cell membrane. It carries out the reaction Na(+)(in) = Na(+)(out). The catalysed reaction is K(+)(in) = K(+)(out). The enzyme catalyses Ca(2+)(in) = Ca(2+)(out). In terms of biological role, forms serotonin (5-hydroxytryptamine/5-HT3)-activated cation-selective channel complexes, which when activated cause fast, depolarizing responses in neurons. The chain is 5-hydroxytryptamine receptor 3E from Homo sapiens (Human).